The primary structure comprises 200 residues: Phospholipase A2 inhibitor gamma subunit B (200 aa).

The signal sequence occupies residues 1 to 19 (MKFLLFCCLFGTFLATGMC). 8 disulfide bridges follow: Cys22–Cys46, Cys25–Cys32, Cys39–Cys67, Cys73–Cys94, Cys95–Cys100, Cys120–Cys145, Cys138–Cys165, and Cys171–Cys191. Asn31 carries N-linked (GlcNAc...) asparagine glycosylation.

The protein belongs to the CNF-like-inhibitor family. In terms of assembly, heterodimer of subunit A and subunit B. Post-translationally, N-glycosylated. Expressed by the liver. Not expressed in esophagus, stomach, pancreas, spleen, gall bladder, small intestine, rectum, kidney, trachea, lung, testis and body fat.

It is found in the secreted. Its function is as follows. Inhibits the enzymatic activity of phospholipase A2 (PA2). The sequence is that of Phospholipase A2 inhibitor gamma subunit B from Elaphe quadrivirgata (Japanese four-lined ratsnake).